Reading from the N-terminus, the 574-residue chain is Glutamyl-tRNA(Gln) amidotransferase subunit B, mitochondrial (574 aa).

The N-terminal 12 residues, 1–12, are a transit peptide targeting the mitochondrion; it reads MIRQFVSHRGIP. The tract at residues 34 to 62 is disordered; sequence PLGRKNWSTSDEAKSKRAAMRKGGAPPPE.

Belongs to the GatB/GatE family. GatB subfamily. In terms of assembly, subunit of the heterotrimeric GatCAB amidotransferase (AdT) complex, composed of A, B and C subunits.

Its subcellular location is the mitochondrion. The catalysed reaction is L-glutamyl-tRNA(Gln) + L-glutamine + ATP + H2O = L-glutaminyl-tRNA(Gln) + L-glutamate + ADP + phosphate + H(+). Functionally, allows the formation of correctly charged Gln-tRNA(Gln) through the transamidation of misacylated Glu-tRNA(Gln) in the mitochondria. The reaction takes place in the presence of glutamine and ATP through an activated gamma-phospho-Glu-tRNA(Gln). This chain is Glutamyl-tRNA(Gln) amidotransferase subunit B, mitochondrial, found in Ajellomyces capsulatus (strain H143) (Darling's disease fungus).